The chain runs to 218 residues: Fibroblast growth factor 15 (218 aa).

The signal sequence occupies residues 1 to 25 (MARKWNGRAVARALVLATLWLAVSG).

The protein belongs to the heparin-binding growth factors family. As to quaternary structure, interacts with MALRD1. In terms of tissue distribution, expressed in the developing brain.

Its subcellular location is the secreted. Its function is as follows. Involved in the suppression of bile acid biosynthesis through down-regulation of CYP7A1 expression. The chain is Fibroblast growth factor 15 (Fgf15) from Mus musculus (Mouse).